Reading from the N-terminus, the 195-residue chain is Interferon omega-1 (195 aa).

An N-terminal signal peptide occupies residues 1-23; that stretch reads MAFVLSLLMALVLVSYGPGGSLG. Intrachain disulfides connect cysteine 24–cysteine 122 and cysteine 52–cysteine 162.

This sequence belongs to the alpha/beta interferon family.

The protein resides in the secreted. The protein is Interferon omega-1 (IFNW1) of Bos taurus (Bovine).